A 419-amino-acid polypeptide reads, in one-letter code: LWamide neuropeptides (419 aa).

A signal peptide spans 1–27 (MEKEMRNLMLLVLLTVILDNGIGKCNA). The tract at residues 27-48 (AKSEEDQDGNARNNRIDKNDDN) is disordered. Positions 28 to 104 (KSEEDQDGNA…ENLDIDSTVQ (77 aa)) are excised as a propeptide. A Tryptophan amide modification is found at Trp110. Positions 113–140 (EADFDNTRAHDSAQISDEKQSGLWVGDA) are excised as a propeptide. Residues 120-132 (RAHDSAQISDEKQ) are compositionally biased toward basic and acidic residues. Positions 120–332 (RAHDSAQISD…PGLWGRQVED (213 aa)) are disordered. Residue Trp146 is modified to Tryptophan amide. Positions 149 to 150 (DA) are excised as a propeptide. Position 156 is a tryptophan amide (Trp156). The propeptide occupies 159 to 160 (DA). Tryptophan amide is present on Trp166. A propeptide spanning residues 169–170 (DA) is cleaved from the precursor. Trp176 carries the tryptophan amide modification. The propeptide occupies 179–180 (DA). The residue at position 186 (Trp186) is a Tryptophan amide. Positions 189–190 (DA) are excised as a propeptide. Trp196 carries the tryptophan amide modification. Positions 199 to 200 (DA) are excised as a propeptide. Residue Trp206 is modified to Tryptophan amide. A propeptide spanning residues 209 to 210 (DA) is cleaved from the precursor. Trp216 carries the tryptophan amide modification. Positions 218-220 (GDA) are cleaved as a propeptide — seems to have a sequencing error or a mutation in position 218; Gly instead of Arg. Trp226 carries the tryptophan amide modification. Residues 229 to 230 (DA) constitute a propeptide that is removed on maturation. Trp236 bears the Tryptophan amide mark. A propeptide spanning residues 239–240 (DA) is cleaved from the precursor. Trp246 carries the tryptophan amide modification. Positions 249–250 (DA) are excised as a propeptide. The residue at position 256 (Trp256) is a Tryptophan amide. A propeptide spanning residues 259-260 (DA) is cleaved from the precursor. Residue Trp266 is modified to Tryptophan amide. Positions 269–270 (DA) are excised as a propeptide. A Tryptophan amide modification is found at Trp276. Positions 279–280 (DT) are excised as a propeptide. At Trp286 the chain carries Tryptophan amide. Residues 289-290 (DA) constitute a propeptide that is removed on maturation. At Trp296 the chain carries Tryptophan amide. Propeptides lie at residues 299 to 300 (DA) and 309 to 320 (DNNVIKSRSDDA). Trp326 is subject to Tryptophan amide. The propeptide occupies 329–419 (QVEDGPTKIW…RRNNKKNNKF (91 aa)).

It belongs to the LWamide neuropeptide family. In terms of tissue distribution, in planula larvae, expressed in a narrow ring of ectodermal neurosensory cells around the widest circumference at the anterior of the larvae. In primary polyps, expression is confined to endodermal cells of the hypostome. In mature polyps, expression is strong in the epidermis from the tentacle level to the base of the polyp and weak in the gastrodermal cells in the apical hypostome.

Its subcellular location is the secreted. Its function is as follows. LWamide peptides may be involved in induction of metamorphosis. This is LWamide neuropeptides from Hydractinia echinata (Snail fur).